The sequence spans 362 residues: 3-dehydroquinate synthase (362 aa).

NAD(+) is bound by residues 70–75 (DGEKYK), 104–108 (GVIGD), 128–129 (TT), lysine 141, lysine 150, and 168–171 (TLNT). Residues glutamate 183, histidine 246, and histidine 263 each coordinate Zn(2+).

Belongs to the sugar phosphate cyclases superfamily. Dehydroquinate synthase family. Co(2+) is required as a cofactor. It depends on Zn(2+) as a cofactor. The cofactor is NAD(+).

Its subcellular location is the cytoplasm. The catalysed reaction is 7-phospho-2-dehydro-3-deoxy-D-arabino-heptonate = 3-dehydroquinate + phosphate. Its pathway is metabolic intermediate biosynthesis; chorismate biosynthesis; chorismate from D-erythrose 4-phosphate and phosphoenolpyruvate: step 2/7. Functionally, catalyzes the conversion of 3-deoxy-D-arabino-heptulosonate 7-phosphate (DAHP) to dehydroquinate (DHQ). The sequence is that of 3-dehydroquinate synthase from Haemophilus influenzae (strain 86-028NP).